Here is a 297-residue protein sequence, read N- to C-terminus: Probable endonuclease 4 (297 aa).

Residues His69, His110, Glu145, Asp179, His182, His214, Asp227, His229, and Glu259 each coordinate Zn(2+).

Belongs to the AP endonuclease 2 family. Zn(2+) is required as a cofactor.

It catalyses the reaction Endonucleolytic cleavage to 5'-phosphooligonucleotide end-products.. Its function is as follows. Endonuclease IV plays a role in DNA repair. It cleaves phosphodiester bonds at apurinic or apyrimidinic (AP) sites, generating a 3'-hydroxyl group and a 5'-terminal sugar phosphate. This chain is Probable endonuclease 4, found in Oceanobacillus iheyensis (strain DSM 14371 / CIP 107618 / JCM 11309 / KCTC 3954 / HTE831).